A 366-amino-acid chain; its full sequence is UPF0324 membrane protein RSc1111 (366 aa).

The next 8 helical transmembrane spans lie at 21 to 43 (LAGAGLLAGCAGVAMIAGATAWA), 103 to 125 (LGASGVVIPLLVLAATMLSGAWV), 137 to 159 (AVLVAAGSAVCGAAAVLAVAPAV), 169 to 191 (AIASVVLFGTAGIFLYPWLYALA), 198 to 220 (VAPAHFGVYIGSTLHEVAQVIAA), 240 to 262 (VLALAPLLVVLACTMPAEGLVLE), 283 to 305 (WFAAGLLGVALLNSGGAIPATWH), and 343 to 365 (AGVLWVGLVAGGAAINAGVRWLA).

The protein belongs to the UPF0324 family.

It is found in the cell membrane. This chain is UPF0324 membrane protein RSc1111, found in Ralstonia nicotianae (strain ATCC BAA-1114 / GMI1000) (Ralstonia solanacearum).